The chain runs to 175 residues: Transcriptional repressor NrdR (175 aa).

Residues Cys-3–Cys-32 fold into a zinc finger. The ATP-cone domain occupies Leu-47 to Gln-137.

It belongs to the NrdR family. Zn(2+) serves as cofactor.

Negatively regulates transcription of bacterial ribonucleotide reductase nrd genes and operons by binding to NrdR-boxes. The sequence is that of Transcriptional repressor NrdR from Dehalococcoides mccartyi (strain ATCC BAA-2266 / KCTC 15142 / 195) (Dehalococcoides ethenogenes (strain 195)).